We begin with the raw amino-acid sequence, 443 residues long: NADH-quinone oxidoreductase subunit D 1 (443 aa).

Belongs to the complex I 49 kDa subunit family. NDH-1 is composed of 14 different subunits. Subunits NuoB, C, D, E, F, and G constitute the peripheral sector of the complex.

The protein localises to the cell membrane. The enzyme catalyses a quinone + NADH + 5 H(+)(in) = a quinol + NAD(+) + 4 H(+)(out). Its function is as follows. NDH-1 shuttles electrons from NADH, via FMN and iron-sulfur (Fe-S) centers, to quinones in the respiratory chain. The immediate electron acceptor for the enzyme in this species is believed to be a menaquinone. Couples the redox reaction to proton translocation (for every two electrons transferred, four hydrogen ions are translocated across the cytoplasmic membrane), and thus conserves the redox energy in a proton gradient. This chain is NADH-quinone oxidoreductase subunit D 1, found in Streptomyces avermitilis (strain ATCC 31267 / DSM 46492 / JCM 5070 / NBRC 14893 / NCIMB 12804 / NRRL 8165 / MA-4680).